Here is a 26-residue protein sequence, read N- to C-terminus: Omega-conotoxin TVIA (26 aa).

3 disulfide bridges follow: Cys-1–Cys-16, Cys-8–Cys-19, and Cys-15–Cys-26. Pro-4, Pro-10, and Pro-21 each carry 4-hydroxyproline.

Belongs to the conotoxin O1 superfamily. Expressed by the venom duct.

It is found in the secreted. Its function is as follows. Omega-conotoxins act at presynaptic membranes, they bind and block voltage-gated calcium channels (Cav). The sequence is that of Omega-conotoxin TVIA from Conus tulipa (Fish-hunting cone snail).